The primary structure comprises 312 residues: Aspartoacylase (312 aa).

Residues His-20 and Glu-23 each contribute to the Zn(2+) site. Arg-62, Asn-69, and Arg-70 together coordinate N-acetyl-L-aspartate. Residue His-115 participates in Zn(2+) binding. Residues Tyr-163 and Arg-167 each contribute to the N-acetyl-L-aspartate site. Glu-177 (proton donor/acceptor) is an active-site residue. Position 287 (Tyr-287) interacts with N-acetyl-L-aspartate.

This sequence belongs to the AspA/AstE family. Aspartoacylase subfamily. In terms of assembly, homodimer. Requires Zn(2+) as cofactor.

It localises to the cytoplasm. Its subcellular location is the nucleus. It carries out the reaction an N-acyl-L-aspartate + H2O = a carboxylate + L-aspartate. The catalysed reaction is N-acetyl-L-aspartate + H2O = L-aspartate + acetate. Functionally, catalyzes the deacetylation of N-acetylaspartic acid (NAA) to produce acetate and L-aspartate. NAA occurs in high concentration in brain and its hydrolysis NAA plays a significant part in the maintenance of intact white matter. In other tissues it acts as a scavenger of NAA from body fluids. The polypeptide is Aspartoacylase (Mus musculus (Mouse)).